The sequence spans 276 residues: Formamidopyrimidine-DNA glycosylase (276 aa).

Proline 2 serves as the catalytic Schiff-base intermediate with DNA. The active-site Proton donor is the glutamate 3. The Proton donor; for beta-elimination activity role is filled by lysine 59. Positions 93, 112, and 155 each coordinate DNA. The segment at 240–274 (QVYNREGKPCPRCGDKIAKKKVGGRSSYYCPTCQK) adopts an FPG-type zinc-finger fold. Arginine 264 acts as the Proton donor; for delta-elimination activity in catalysis.

The protein belongs to the FPG family. In terms of assembly, monomer. Zn(2+) serves as cofactor.

It carries out the reaction Hydrolysis of DNA containing ring-opened 7-methylguanine residues, releasing 2,6-diamino-4-hydroxy-5-(N-methyl)formamidopyrimidine.. The catalysed reaction is 2'-deoxyribonucleotide-(2'-deoxyribose 5'-phosphate)-2'-deoxyribonucleotide-DNA = a 3'-end 2'-deoxyribonucleotide-(2,3-dehydro-2,3-deoxyribose 5'-phosphate)-DNA + a 5'-end 5'-phospho-2'-deoxyribonucleoside-DNA + H(+). Functionally, involved in base excision repair of DNA damaged by oxidation or by mutagenic agents. Acts as a DNA glycosylase that recognizes and removes damaged bases. Has a preference for oxidized purines, such as 7,8-dihydro-8-oxoguanine (8-oxoG). Has AP (apurinic/apyrimidinic) lyase activity and introduces nicks in the DNA strand. Cleaves the DNA backbone by beta-delta elimination to generate a single-strand break at the site of the removed base with both 3'- and 5'-phosphates. This chain is Formamidopyrimidine-DNA glycosylase, found in Pelotomaculum thermopropionicum (strain DSM 13744 / JCM 10971 / SI).